Here is a 279-residue protein sequence, read N- to C-terminus: Prepilin leader peptidase/N-methyltransferase (279 aa).

At 1-16 the chain is on the periplasmic side; that stretch reads MDDLREFAQLFPAWWF. A helical membrane pass occupies residues 17-35; sequence GALGVLGLIVGSFLNVVIY. At 36-104 the chain is on the cytoplasmic side; that stretch reads RLPIMLERRW…RSRCCHQSVS (69 aa). The helical transmembrane segment at 105–123 threads the bilayer; the sequence is VQYPLVEVITMLAFLAAGL. Residues 124-130 lie on the Periplasmic side of the membrane; that stretch reads LWLPGMA. A helical membrane pass occupies residues 131–149; it reads LWGALILLSFLLVLTVIDI. At 150-163 the chain is on the cytoplasmic side; sequence KTLLLPDELTLSLL. The chain crosses the membrane as a helical span at residues 164–182; sequence WMGLLFNLSGTFVSLNDAV. Residues 183 to 185 are Periplasmic-facing; that stretch reads VGA. Residues 186-204 form a helical membrane-spanning segment; it reads MAGYLSLWLLYWAFKYATG. The Cytoplasmic segment spans residues 205–214; sequence KEALGYGDFK. Residues 215 to 233 form a helical membrane-spanning segment; it reads LLAALGAWLGWQALPNLVL. Over 234 to 236 the chain is Periplasmic; sequence VAA. Residues 237-254 form a helical membrane-spanning segment; that stretch reads LSGLVVTLIWRGLRKEDT. Residues 255 to 257 are Cytoplasmic-facing; that stretch reads AKP. A helical transmembrane segment spans residues 258–276; the sequence is LAFGPWLAIGGVFGMIMNG. The Periplasmic segment spans residues 277-279; the sequence is FNL.

Belongs to the peptidase A24 family.

Its subcellular location is the cell inner membrane. It catalyses the reaction Typically cleaves a -Gly-|-Phe- bond to release an N-terminal, basic peptide of 5-8 residues from type IV prepilin, and then N-methylates the new N-terminal amino group, the methyl donor being S-adenosyl-L-methionine.. Its function is as follows. Plays a role in type II pseudopili formation by proteolytically removing the leader sequence from substrate proteins and subsequently monomethylating the alpha-amino group of the newly exposed N-terminal phenylalanine. Substrates include proteins required for biogenesis of the type II general secretory apparatus. In Pectobacterium carotovorum subsp. carotovorum (Erwinia carotovora subsp. carotovora), this protein is Prepilin leader peptidase/N-methyltransferase (outO).